The following is a 991-amino-acid chain: UvrABC system protein A (991 aa).

48–55 provides a ligand contact to ATP; sequence GLSGSGKS. 2 consecutive ABC transporter domains span residues 345-624 and 644-972; these read WAKS…PKSL and NHRR…KFLE. 676–683 contributes to the ATP binding site; the sequence is GVSGGGKS. The C4-type zinc-finger motif lies at 775–801; the sequence is CEACQGDGVIKIEMHFLPDVYVTCDVC.

Belongs to the ABC transporter superfamily. UvrA family. In terms of assembly, forms a heterotetramer with UvrB during the search for lesions.

It localises to the cytoplasm. The UvrABC repair system catalyzes the recognition and processing of DNA lesions. UvrA is an ATPase and a DNA-binding protein. A damage recognition complex composed of 2 UvrA and 2 UvrB subunits scans DNA for abnormalities. When the presence of a lesion has been verified by UvrB, the UvrA molecules dissociate. The polypeptide is UvrABC system protein A (Bradyrhizobium diazoefficiens (strain JCM 10833 / BCRC 13528 / IAM 13628 / NBRC 14792 / USDA 110)).